The following is a 110-amino-acid chain: Large ribosomal subunit protein uL22 (110 aa).

This sequence belongs to the universal ribosomal protein uL22 family. As to quaternary structure, part of the 50S ribosomal subunit.

This protein binds specifically to 23S rRNA; its binding is stimulated by other ribosomal proteins, e.g. L4, L17, and L20. It is important during the early stages of 50S assembly. It makes multiple contacts with different domains of the 23S rRNA in the assembled 50S subunit and ribosome. Functionally, the globular domain of the protein is located near the polypeptide exit tunnel on the outside of the subunit, while an extended beta-hairpin is found that lines the wall of the exit tunnel in the center of the 70S ribosome. In Bdellovibrio bacteriovorus (strain ATCC 15356 / DSM 50701 / NCIMB 9529 / HD100), this protein is Large ribosomal subunit protein uL22.